Reading from the N-terminus, the 111-residue chain is Small ribosomal subunit protein uS17 (111 aa).

It belongs to the universal ribosomal protein uS17 family. In terms of assembly, part of the 30S ribosomal subunit.

Functionally, one of the primary rRNA binding proteins, it binds specifically to the 5'-end of 16S ribosomal RNA. This chain is Small ribosomal subunit protein uS17, found in Archaeoglobus fulgidus (strain ATCC 49558 / DSM 4304 / JCM 9628 / NBRC 100126 / VC-16).